Reading from the N-terminus, the 1032-residue chain is Kinesin heavy chain isoform 5A (1032 aa).

A2 carries the N-acetylalanine modification. The region spanning 9–327 (SIKVLCRFRP…LMFGQRAKTI (319 aa)) is the Kinesin motor domain. Position 86–93 (86–93 (GQTSSGKT)) interacts with ATP. The tract at residues 174–315 (VSSPEEILDV…PSSYNDAETK (142 aa)) is microtubule-binding. A necessary for interaction with ZFYVE27 region spans residues 271–361 (EGTKSYVPYR…KTKAQKETIA (91 aa)). Residues 331–906 (ASVNLELTAE…VDRIKEAVRY (576 aa)) adopt a coiled-coil conformation. The segment at 353–1032 (TKAQKETIAK…FPLHQETAAS (680 aa)) is interaction with BICD2. The residue at position 397 (T397) is a Phosphothreonine. 2 disordered regions span residues 906-939 (YKSS…YGTR) and 978-1010 (SGAT…RSDL). Residues 907–1032 (KSSGKRGHSA…FPLHQETAAS (126 aa)) are globular. Residues 978-989 (SGATSSGGPLAS) are compositionally biased toward low complexity. Polar residues predominate over residues 991–1003 (QKANMDNGNATDI).

The protein belongs to the TRAFAC class myosin-kinesin ATPase superfamily. Kinesin family. Kinesin subfamily. Oligomer composed of two heavy chains and two light chains. Interacts with GRIP1. Interacts with FMR1 (via C-terminus); this interaction is increased in a mGluR-dependent manner. Interacts with ZFYVE27. Interacts with VAPA, VAPB, SURF4, RAB11A (GDP-bound form), RAB11B (GDP-bound form) and RTN3 in a ZFYVE27-dependent manner. Interacts with BORCS5. Interacts with BICD2. Interacts with DTNB. As to expression, distributed throughout the CNS but is highly enriched in subsets of neurons.

The protein localises to the cytoplasm. Its subcellular location is the perinuclear region. It is found in the cytoskeleton. It localises to the perikaryon. The catalysed reaction is ATP + H2O + a kinesin associated with a microtubule at position (n) = ADP + phosphate a kinesin associated with a microtubule at position (n+1, toward the plus end).. Its function is as follows. Microtubule-dependent motor required for slow axonal transport of neurofilament proteins (NFH, NFM and NFL). Can induce formation of neurite-like membrane protrusions in non-neuronal cells in a ZFYVE27-dependent manner. The ZFYVE27-KIF5A complex contributes to the vesicular transport of VAPA, VAPB, SURF4, RAB11A, RAB11B and RTN3 proteins in neurons. Required for anterograde axonal transportation of MAPK8IP3/JIP3 which is essential for MAPK8IP3/JIP3 function in axon elongation. In Homo sapiens (Human), this protein is Kinesin heavy chain isoform 5A.